A 410-amino-acid chain; its full sequence is LL-diaminopimelate aminotransferase (410 aa).

Substrate contacts are provided by tyrosine 15 and glycine 42. Pyridoxal 5'-phosphate is bound by residues tyrosine 72, 108–109 (AK), tyrosine 132, asparagine 187, tyrosine 218, and 246–248 (SFS). 3 residues coordinate substrate: lysine 109, tyrosine 132, and asparagine 187. Residue lysine 249 is modified to N6-(pyridoxal phosphate)lysine. Residues arginine 257 and asparagine 292 each coordinate pyridoxal 5'-phosphate. The substrate site is built by asparagine 292 and arginine 388.

This sequence belongs to the class-I pyridoxal-phosphate-dependent aminotransferase family. LL-diaminopimelate aminotransferase subfamily. Homodimer. Pyridoxal 5'-phosphate serves as cofactor.

The catalysed reaction is (2S,6S)-2,6-diaminopimelate + 2-oxoglutarate = (S)-2,3,4,5-tetrahydrodipicolinate + L-glutamate + H2O + H(+). Its pathway is amino-acid biosynthesis; L-lysine biosynthesis via DAP pathway; LL-2,6-diaminopimelate from (S)-tetrahydrodipicolinate (aminotransferase route): step 1/1. Its function is as follows. Involved in the synthesis of meso-diaminopimelate (m-DAP or DL-DAP), required for both lysine and peptidoglycan biosynthesis. Catalyzes the direct conversion of tetrahydrodipicolinate to LL-diaminopimelate. Is also able to catalyze the reverse reaction in vitro, i.e. the transamination of LL-diaminopimelate with 2-oxoglutarate to produce 2-oxo-6-aminopimelate (in equilibrium with tetrahydrodipicolinate) and glutamate. Has maximal aminotransferase activity using 2-oxoglutarate as an amino group acceptor, and cannot use oxaloacetate instead of 2-oxoglutarate, although 2-oxoadipate can substitute with 21% relative activity. Cannot use m-DAP, lysine or ornithine as the amino-group donor, when using 2-oxoglutarate as the amino-group acceptor. The sequence is that of LL-diaminopimelate aminotransferase from Methanothermobacter thermautotrophicus (strain ATCC 29096 / DSM 1053 / JCM 10044 / NBRC 100330 / Delta H) (Methanobacterium thermoautotrophicum).